The chain runs to 837 residues: Outer membrane usher protein HifC (837 aa).

A signal peptide spans 1 to 26 (MKTKNFPLNKIAFACTLLLANPVAWA). A disulfide bridge links C813 with C833.

The protein belongs to the fimbrial export usher family.

The protein localises to the cell outer membrane. Functionally, essential for piliation. The chain is Outer membrane usher protein HifC (hifC) from Haemophilus influenzae.